The primary structure comprises 438 residues: Enolase (438 aa).

(2R)-2-phosphoglycerate is bound at residue Q174. E216 (proton donor) is an active-site residue. Mg(2+) is bound by residues D253, E297, and D324. (2R)-2-phosphoglycerate is bound by residues K349, R378, S379, and K400. K349 acts as the Proton acceptor in catalysis.

It belongs to the enolase family. In terms of assembly, component of the RNA degradosome, a multiprotein complex involved in RNA processing and mRNA degradation. Mg(2+) serves as cofactor.

The protein localises to the cytoplasm. It is found in the secreted. Its subcellular location is the cell surface. The enzyme catalyses (2R)-2-phosphoglycerate = phosphoenolpyruvate + H2O. It functions in the pathway carbohydrate degradation; glycolysis; pyruvate from D-glyceraldehyde 3-phosphate: step 4/5. Functionally, catalyzes the reversible conversion of 2-phosphoglycerate (2-PG) into phosphoenolpyruvate (PEP). It is essential for the degradation of carbohydrates via glycolysis. The protein is Enolase of Psychrobacter arcticus (strain DSM 17307 / VKM B-2377 / 273-4).